The chain runs to 535 residues: CTP synthase (535 aa).

An amidoligase domain region spans residues 1 to 267 (MTKFIFVTGG…DDIVIQRLQL (267 aa)). Serine 13 is a binding site for CTP. Residue serine 13 coordinates UTP. 14-19 (SLGKGI) contacts ATP. Tyrosine 54 is a binding site for L-glutamine. Aspartate 71 lines the ATP pocket. Residues aspartate 71 and glutamate 141 each contribute to the Mg(2+) site. CTP-binding positions include 148–150 (DIE), 188–193 (KTKPTQ), and lysine 224. Residues 188 to 193 (KTKPTQ) and lysine 224 each bind UTP. 240-242 (RDA) is an ATP binding site. In terms of domain architecture, Glutamine amidotransferase type-1 spans 293-535 (TIGLVGKYVS…VEAALNYQQK (243 aa)). Residue glycine 355 coordinates L-glutamine. Cysteine 382 (nucleophile; for glutamine hydrolysis) is an active-site residue. L-glutamine-binding positions include 383 to 386 (LGMQ), glutamate 406, and arginine 463. Catalysis depends on residues histidine 508 and glutamate 510.

It belongs to the CTP synthase family. In terms of assembly, homotetramer.

The enzyme catalyses UTP + L-glutamine + ATP + H2O = CTP + L-glutamate + ADP + phosphate + 2 H(+). It carries out the reaction L-glutamine + H2O = L-glutamate + NH4(+). It catalyses the reaction UTP + NH4(+) + ATP = CTP + ADP + phosphate + 2 H(+). Its pathway is pyrimidine metabolism; CTP biosynthesis via de novo pathway; CTP from UDP: step 2/2. With respect to regulation, allosterically activated by GTP, when glutamine is the substrate; GTP has no effect on the reaction when ammonia is the substrate. The allosteric effector GTP functions by stabilizing the protein conformation that binds the tetrahedral intermediate(s) formed during glutamine hydrolysis. Inhibited by the product CTP, via allosteric rather than competitive inhibition. Its function is as follows. Catalyzes the ATP-dependent amination of UTP to CTP with either L-glutamine or ammonia as the source of nitrogen. Regulates intracellular CTP levels through interactions with the four ribonucleotide triphosphates. The sequence is that of CTP synthase from Staphylococcus epidermidis (strain ATCC 35984 / DSM 28319 / BCRC 17069 / CCUG 31568 / BM 3577 / RP62A).